The following is a 438-amino-acid chain: Adenylosuccinate synthetase (438 aa).

GTP contacts are provided by residues 13–19 (GDEGKGK) and 41–43 (GHT). Residue D14 is the Proton acceptor of the active site. Positions 14 and 41 each coordinate Mg(2+). Residues 14 to 17 (DEGK), 39 to 42 (NAGH), T130, R144, Q225, T240, and R310 contribute to the IMP site. H42 (proton donor) is an active-site residue. Substrate is bound at residue 306-312 (ATTGRLR). GTP-binding positions include R312, 338 to 340 (KLD), and 421 to 423 (STG).

This sequence belongs to the adenylosuccinate synthetase family. In terms of assembly, homodimer. Mg(2+) serves as cofactor.

The protein localises to the cytoplasm. It catalyses the reaction IMP + L-aspartate + GTP = N(6)-(1,2-dicarboxyethyl)-AMP + GDP + phosphate + 2 H(+). It functions in the pathway purine metabolism; AMP biosynthesis via de novo pathway; AMP from IMP: step 1/2. Functionally, plays an important role in the de novo pathway of purine nucleotide biosynthesis. Catalyzes the first committed step in the biosynthesis of AMP from IMP. The protein is Adenylosuccinate synthetase of Vibrio vulnificus (strain YJ016).